The sequence spans 359 residues: Salicylate carboxymethyltransferase (359 aa).

Y18 lines the S-adenosyl-L-methionine pocket. Residues Y18, 21-25 (NSFIQ), and Q25 each bind substrate. S-adenosyl-L-methionine is bound by residues G59, 59–60 (GC), 59–61 (GCS), N65, 96–99 (LNDL), D98, 129–131 (SFY), and 146–148 (SYS). Residues 147–151 (YSLMW) and W151 each bind substrate. Mg(2+)-binding residues include N162, D248, F250, and N251. Residue Y255 coordinates substrate.

It belongs to the methyltransferase superfamily. SABATH family.

It carries out the reaction salicylate + S-adenosyl-L-methionine = methyl salicylate + S-adenosyl-L-homocysteine. In terms of biological role, catalyzes the methylation of the free carboxyl end of the plant hormone salicylic acid (SA). Converts SA to SA methyl ester (MSA). The volatile compound MSA is hypothesized to act as an airborne signal that triggers defense responses in uninfected plants. MSA is an important chemoattractant for moth pollinated flowering plants. The polypeptide is Salicylate carboxymethyltransferase (SAMT) (Clarkia breweri (Fairy fans)).